A 589-amino-acid polypeptide reads, in one-letter code: WD repeat-containing protein 26 homolog (589 aa).

The disordered stretch occupies residues 1–57 (MGVVEDTEPPLKRAKRLADEPNGFSANSSVRGSSVNSNSLGDLMARPLPSQGDDETI). Residues 25–39 (SANSSVRGSSVNSNS) show a composition bias toward low complexity. The region spanning 64–96 (RKSEFVRIITRALYSLGYDKTGAMLEEESGISL) is the LisH domain. The 58-residue stretch at 97 to 154 (HNSTIKLFLQQVKDGKWDQSVKTLHRIGFPDEKAVKAASFLLLEQKFLEFLKVEKIAD) folds into the CTLH domain. WD repeat units follow at residues 272–311 (SHTD…HISL), 317–358 (GHHK…HMYE), 360–398 (GGIS…KECW), 401–440 (QRTQ…ERLI), 442–480 (EEDM…KIVS), 484–526 (GHKR…LIVE), and 529–569 (GHAG…QQNQ).

Interacts with RANBPM. In terms of tissue distribution, expressed in roots, leaves and flowers.

Its subcellular location is the cytoplasm. Its function is as follows. Acts as a component involved in the crosstalk regulation between light, hormone and abiotic stress response. The polypeptide is WD repeat-containing protein 26 homolog (Arabidopsis thaliana (Mouse-ear cress)).